The following is a 255-amino-acid chain: Ribosomal RNA small subunit methyltransferase A (255 aa).

S-adenosyl-L-methionine contacts are provided by Asn11, Leu13, Gly38, Glu59, Asp83, and Asn101.

The protein belongs to the class I-like SAM-binding methyltransferase superfamily. rRNA adenine N(6)-methyltransferase family. RsmA subfamily.

Its subcellular location is the cytoplasm. It carries out the reaction adenosine(1518)/adenosine(1519) in 16S rRNA + 4 S-adenosyl-L-methionine = N(6)-dimethyladenosine(1518)/N(6)-dimethyladenosine(1519) in 16S rRNA + 4 S-adenosyl-L-homocysteine + 4 H(+). Functionally, specifically dimethylates two adjacent adenosines (A1518 and A1519) in the loop of a conserved hairpin near the 3'-end of 16S rRNA in the 30S particle. May play a critical role in biogenesis of 30S subunits. This chain is Ribosomal RNA small subunit methyltransferase A, found in Thiobacillus denitrificans (strain ATCC 25259 / T1).